The primary structure comprises 427 residues: Transcription termination factor Rho (427 aa).

The Rho RNA-BD domain maps to 51–125 (LLFMEGVLEI…LHVEAVNGDD (75 aa)). ATP is bound by residues 168–173 (GFGQRG), 180–185 (KAGKTM), and Arg-211.

The protein belongs to the Rho family. In terms of assembly, homohexamer. The homohexamer assembles into an open ring structure.

Facilitates transcription termination by a mechanism that involves Rho binding to the nascent RNA, activation of Rho's RNA-dependent ATPase activity, and release of the mRNA from the DNA template. The polypeptide is Transcription termination factor Rho (Bacillus subtilis (strain 168)).